A 95-amino-acid chain; its full sequence is 6 kDa early secretory antigenic target (95 aa).

The next 2 helical transmembrane spans lie at 11–43 and 49–85; these read IEAAASAIQGNVTSIHSLLDEGKQSLTKLAAAW and EAYQGVQQKWDATATELNNALQNLARTISEAGQAMAS. The stretch at 56–87 forms a coiled coil; that stretch reads QKWDATATELNNALQNLARTISEAGQAMASTE.

This sequence belongs to the WXG100 family. ESAT-6 subfamily. In terms of assembly, forms a tight 1:1 complex with EsxB (CFP-10).

The protein resides in the secreted. It localises to the host membrane. A secreted protein. Acts as a strong host T-cell antigen. Plays a number of roles in modulating the host's immune response to infection as well as being responsible for bacterial escape into the host cytoplasm. The chain is 6 kDa early secretory antigenic target (esxA) from Mycobacterium bovis (strain ATCC BAA-935 / AF2122/97).